A 574-amino-acid polypeptide reads, in one-letter code: Lengsin (574 aa).

2 disordered regions span residues 1-36 and 66-131; these read MNDE…KVTK and GNMS…IPTT. The span at 11 to 23 shows a compositional bias: basic and acidic residues; that stretch reads NTRDEGNETEASR. Residues 25 to 36 are compositionally biased toward basic residues; sequence SKLRRTRKKVTK. Residues 91 to 131 show a composition bias toward polar residues; the sequence is NQTTVIKPSPLKTSASAPCSEFNTNSNHADNTWEDTQIPTT. In terms of domain architecture, GS beta-grasp spans 148 to 242; sequence NHLQFVRFEA…VICDTFTVTG (95 aa). In terms of domain architecture, GS catalytic spans 249–574; sequence PRYIAKRQLS…ERNKFLEYFI (326 aa).

The protein belongs to the glutamine synthetase family. Dodecamer. Interacts with BFSP2 and VIM.

Functionally, may act as a component of the cytoskeleton or as a chaperone for the reorganization of intermediate filament proteins during terminal differentiation in the lens. Does not seem to have enzymatic activity. This is Lengsin (LGSN) from Canis lupus familiaris (Dog).